The primary structure comprises 201 residues: 3-isopropylmalate dehydratase small subunit (201 aa).

The protein belongs to the LeuD family. LeuD type 1 subfamily. In terms of assembly, heterodimer of LeuC and LeuD.

The enzyme catalyses (2R,3S)-3-isopropylmalate = (2S)-2-isopropylmalate. It participates in amino-acid biosynthesis; L-leucine biosynthesis; L-leucine from 3-methyl-2-oxobutanoate: step 2/4. Its function is as follows. Catalyzes the isomerization between 2-isopropylmalate and 3-isopropylmalate, via the formation of 2-isopropylmaleate. This is 3-isopropylmalate dehydratase small subunit from Kineococcus radiotolerans (strain ATCC BAA-149 / DSM 14245 / SRS30216).